The primary structure comprises 71 residues: Cytotoxic linear peptide IsCT2 (71 aa).

The signal sequence occupies residues 1–23 (MKTQFAILLVALVLFQMFAQSEA). F36 bears the Phenylalanine amide mark. The propeptide occupies 40–71 (ALNNDLDLDGLDELFDGEISQADVDFLKELMR).

Belongs to the non-disulfide-bridged peptide (NDBP) superfamily. Short antimicrobial peptide (group 4) family. In terms of processing, isCT2F is an enzymatic proteolytic cleavage product of IsCT2 by the proteases present in the venom. Expressed by the venom gland.

The protein resides in the secreted. Its subcellular location is the target cell membrane. In terms of biological role, isCT2 shows weak hemolytic activity and antibacterial activity against both Gram-positive and Gram-negative bacteria probably by forming pores in the cell membrane. IsCT2 adopts an amphipathic alpha-helical structure. Its function is as follows. IsCT2f shows neither hemolytic, nor antibacterial activities, surely due to the fact that it cannot apply amphipathic alpha-helical structure. The protein is Cytotoxic linear peptide IsCT2 of Opisthacanthus madagascariensis (Scorpion).